The following is a 508-amino-acid chain: Maturase K (508 aa).

It belongs to the intron maturase 2 family. MatK subfamily.

Its subcellular location is the plastid. It localises to the chloroplast. Its function is as follows. Usually encoded in the trnK tRNA gene intron. Probably assists in splicing its own and other chloroplast group II introns. The protein is Maturase K of Chaetosphaeridium globosum (Charophycean green alga).